The primary structure comprises 101 residues: DNA-binding protein Fis (101 aa).

Positions 77–96 (QTRAANMLGINRGTLRKKLK) form a DNA-binding region, H-T-H motif.

It belongs to the transcriptional regulatory Fis family. In terms of assembly, homodimer.

Its function is as follows. Activates ribosomal RNA transcription. Plays a direct role in upstream activation of rRNA promoters. The sequence is that of DNA-binding protein Fis from Shewanella pealeana (strain ATCC 700345 / ANG-SQ1).